A 500-amino-acid polypeptide reads, in one-letter code: Glycerol kinase (500 aa).

T11 serves as a coordination point for ADP. T11, T12, and S13 together coordinate ATP. Residue T11 coordinates sn-glycerol 3-phosphate. R15 is a binding site for ADP. Sn-glycerol 3-phosphate-binding residues include R81, E82, Y133, and D242. The glycerol site is built by R81, E82, Y133, D242, and Q243. T264 and G307 together coordinate ADP. 4 residues coordinate ATP: T264, G307, Q311, and G411. G411 lines the ADP pocket.

The protein belongs to the FGGY kinase family.

The catalysed reaction is glycerol + ATP = sn-glycerol 3-phosphate + ADP + H(+). Its pathway is polyol metabolism; glycerol degradation via glycerol kinase pathway; sn-glycerol 3-phosphate from glycerol: step 1/1. Inhibited by fructose 1,6-bisphosphate (FBP). Functionally, key enzyme in the regulation of glycerol uptake and metabolism. Catalyzes the phosphorylation of glycerol to yield sn-glycerol 3-phosphate. The protein is Glycerol kinase of Rhodopseudomonas palustris (strain ATCC BAA-98 / CGA009).